The chain runs to 432 residues: Glutamate-1-semialdehyde 2,1-aminomutase (432 aa).

An N6-(pyridoxal phosphate)lysine modification is found at Lys272.

This sequence belongs to the class-III pyridoxal-phosphate-dependent aminotransferase family. HemL subfamily. Homodimer. Pyridoxal 5'-phosphate is required as a cofactor.

Its subcellular location is the cytoplasm. The enzyme catalyses (S)-4-amino-5-oxopentanoate = 5-aminolevulinate. Its pathway is porphyrin-containing compound metabolism; protoporphyrin-IX biosynthesis; 5-aminolevulinate from L-glutamyl-tRNA(Glu): step 2/2. The protein operates within porphyrin-containing compound metabolism; chlorophyll biosynthesis. In Picosynechococcus sp. (strain ATCC 27264 / PCC 7002 / PR-6) (Agmenellum quadruplicatum), this protein is Glutamate-1-semialdehyde 2,1-aminomutase.